The chain runs to 5488 residues: Polyketide synthase PksN (5488 aa).

Residues 3–301 (RQLKSPLSEG…NMMAVRSKNI (299 aa)) form a condensation region. The stretch at 165–205 (QQPSTADYYDFVDWENRMLTGREGEEHLAYWKEQLSGSLPV) is one WD 1 repeat. An adenylation region spans residues 493–903 (TYKEVDEKST…EFPGILDQAV (411 aa)). The stretch at 965–1006 (RKELEKREIVFNRRKPNHLQLTEIEDQVLRIWEETLKVSGFG) is one WD 2 repeat. A Carrier 1 domain is found at 983-1058 (LQLTEIEDQV…AISEYILEMK (76 aa)). O-(pantetheine 4'-phosphoryl)serine is present on Ser1018. Positions 1089-1515 (DDSVAIVGIS…GTNAHAIFEQ (427 aa)) constitute a Ketosynthase family 3 (KS3) 1 domain. Residues Cys1261, His1397, and His1437 each act as for beta-ketoacyl synthase 1 activity in the active site. Residues 1700-1826 (HPLVHHNTSV…GKAELIQLKR (127 aa)) form an N-terminal hotdog fold 1 region. In terms of domain architecture, PKS/mFAS DH 1 spans 1700 to 1992 (HPLVHHNTSV…TRVMEADIQT (293 aa)). His1729 acts as the Proton acceptor; for dehydratase activity 1 in catalysis. Residues 1840–1992 (DQSKMDAASF…TRVMEADIQT (153 aa)) form a C-terminal hotdog fold 1 region. Asp1900 serves as the catalytic Proton donor; for dehydratase activity 1. The WD 3 repeat unit spans residues 2165–2204 (KQAKGDGSKPWKDNGVYLISGGAGGLGHIFAKEIAEQTKN). The region spanning 2448-2525 (SLLDKVKAML…AFGKHLSEEY (78 aa)) is the Carrier 2 domain. O-(pantetheine 4'-phosphoryl)serine is present on Ser2485. Residues 2576–3012 (PEPIAIVGIS…GVNAHVIIEE (437 aa)) enclose the Ketosynthase family 3 (KS3) 2 domain. Catalysis depends on for beta-ketoacyl synthase 2 activity residues Cys2747, His2882, and His2928. The stretch at 3038–3109 (KNEARLKEHA…AAEKSGVEDV (72 aa)) forms a coiled coil. An N-terminal hotdog fold 2 region spans residues 3207-3332 (HPLMHQNTSN…GSAVLNPAEN (126 aa)). The PKS/mFAS DH 2 domain maps to 3207–3492 (HPLMHQNTSN…FRAAEGGSGS (286 aa)). The active-site Proton acceptor; for dehydratase activity 2 is His3236. The segment at 3346 to 3492 (QESHFSVNEV…FRAAEGGSGS (147 aa)) is C-terminal hotdog fold 2. Catalysis depends on Asp3408, which acts as the Proton donor; for dehydratase activity 2. The stretch at 3626 to 3655 (DSHENVESVIEKLKENKRHTEDQHIKYEKG) forms a coiled coil. The WD 4 repeat unit spans residues 3666–3705 (QIDDREISMPWRDKGVYLITGGAGGLGFIFAKEIARQAEQ). Positions 3952–4026 (DHIQEVLKQT…AFAGYLSEEY (75 aa)) constitute a Carrier 3 domain. Ser3986 carries the O-(pantetheine 4'-phosphoryl)serine modification. The Ketosynthase family 3 (KS3) 3 domain occupies 4076–4511 (PEPIAIVGMS…GVNAHVVIEE (436 aa)). Residues Cys4245, His4380, and His4427 each act as for beta-ketoacyl synthase 3 activity in the active site. The tract at residues 4706–4830 (HPLIHVNTSD…GSASIRGAGD (125 aa)) is N-terminal hotdog fold 3. The 283-residue stretch at 4706–4988 (HPLIHVNTSD…SRLLEEGIQP (283 aa)) folds into the PKS/mFAS DH 3 domain. His4735 functions as the Proton acceptor; for dehydratase activity 3 in the catalytic mechanism. Residues 4844–4988 (SLSTLSHDQC…SRLLEEGIQP (145 aa)) form a C-terminal hotdog fold 3 region. Asp4906 (proton donor; for dehydratase activity 3) is an active-site residue. Residues 5206 to 5244 (HNNQPVHTKYKHGGVYVVIGGAGGIGEAWSEYMIRTYQA) form a WD 5 repeat. Residues 5275–5303 (IQADAANREELERAYETMKQTHREINGII) are a coiled coil.

Belongs to the ATP-dependent AMP-binding enzyme family. Pantetheine 4'-phosphate serves as cofactor.

Its subcellular location is the cytoplasm. The protein operates within antibiotic biosynthesis; bacillaene biosynthesis. Functionally, involved in some intermediate steps for the synthesis of the antibiotic polyketide bacillaene which is involved in secondary metabolism. This Bacillus subtilis (strain 168) protein is Polyketide synthase PksN (pksN).